We begin with the raw amino-acid sequence, 346 residues long: Probable dual-specificity RNA methyltransferase RlmN (346 aa).

The active-site Proton acceptor is E76. The Radical SAM core domain maps to 97–329; sequence SYDRATICVS…TFIRKPRGRD (233 aa). C104 and C334 form a disulfide bridge. [4Fe-4S] cluster is bound by residues C111, C115, and C118. S-adenosyl-L-methionine contacts are provided by residues 162–163, S192, 215–217, and N291; these read GE and SLN. The active-site S-methylcysteine intermediate is C334.

It belongs to the radical SAM superfamily. RlmN family. [4Fe-4S] cluster serves as cofactor.

Its subcellular location is the cytoplasm. It catalyses the reaction adenosine(2503) in 23S rRNA + 2 reduced [2Fe-2S]-[ferredoxin] + 2 S-adenosyl-L-methionine = 2-methyladenosine(2503) in 23S rRNA + 5'-deoxyadenosine + L-methionine + 2 oxidized [2Fe-2S]-[ferredoxin] + S-adenosyl-L-homocysteine. It carries out the reaction adenosine(37) in tRNA + 2 reduced [2Fe-2S]-[ferredoxin] + 2 S-adenosyl-L-methionine = 2-methyladenosine(37) in tRNA + 5'-deoxyadenosine + L-methionine + 2 oxidized [2Fe-2S]-[ferredoxin] + S-adenosyl-L-homocysteine. Its function is as follows. Specifically methylates position 2 of adenine 2503 in 23S rRNA and position 2 of adenine 37 in tRNAs. This chain is Probable dual-specificity RNA methyltransferase RlmN, found in Koribacter versatilis (strain Ellin345).